Consider the following 143-residue polypeptide: Large ribosomal subunit protein uL11 (143 aa).

The protein belongs to the universal ribosomal protein uL11 family. As to quaternary structure, part of the ribosomal stalk of the 50S ribosomal subunit. Interacts with L10 and the large rRNA to form the base of the stalk. L10 forms an elongated spine to which L12 dimers bind in a sequential fashion forming a multimeric L10(L12)X complex. In terms of processing, one or more lysine residues are methylated.

Functionally, forms part of the ribosomal stalk which helps the ribosome interact with GTP-bound translation factors. The chain is Large ribosomal subunit protein uL11 from Caulobacter vibrioides (strain ATCC 19089 / CIP 103742 / CB 15) (Caulobacter crescentus).